The primary structure comprises 145 residues: Neutral phospholipase A2 paradoxin-like beta chain (145 aa).

Residues 1–27 form the signal peptide; the sequence is MHPAHLLVLLAVCVSLLGASDIPPLPL. 7 disulfides stabilise this stretch: Cys-38–Cys-98, Cys-54–Cys-144, Cys-56–Cys-72, Cys-71–Cys-125, Cys-78–Cys-118, Cys-87–Cys-111, and Cys-105–Cys-116.

It belongs to the phospholipase A2 family. Group I subfamily. N49 sub-subfamily. In terms of assembly, heterotrimer of alpha, beta, and gamma chains; non-covalently linked. Expressed by the venom gland.

Its subcellular location is the secreted. Its function is as follows. Heterotrimer: Snake venom phospholipase A2 (PLA2) heterotrimer that acts as a potent presynaptic neurotoxin by blocking synaptic transmission and synaptic vesicle recycling. May act by binding in a calcium-dependent fashion to neurotonal pentraxin-1 (NPTX1) and neurotonal pentraxin-2 (NPTX2), but not to neuronal pentraxin receptor (NPTXR). Also binds to taipoxin-associated calcium binding protein 49 (RCN2), a protein localized in the lumen of endoplasmic reticulum. In terms of biological role, monomer (beta chain): Snake venom phospholipase A2 homolog that is neither toxic nor enzymatically active. Does not bind calcium. This chain is Neutral phospholipase A2 paradoxin-like beta chain, found in Oxyuranus microlepidotus (Inland taipan).